Here is a 280-residue protein sequence, read N- to C-terminus: Probable endonuclease 4 (280 aa).

9 residues coordinate Zn(2+): histidine 77, histidine 117, glutamate 148, aspartate 180, histidine 183, histidine 215, aspartate 228, histidine 230, and glutamate 259.

Belongs to the AP endonuclease 2 family. Zn(2+) is required as a cofactor.

The enzyme catalyses Endonucleolytic cleavage to 5'-phosphooligonucleotide end-products.. In terms of biological role, endonuclease IV plays a role in DNA repair. It cleaves phosphodiester bonds at apurinic or apyrimidinic (AP) sites, generating a 3'-hydroxyl group and a 5'-terminal sugar phosphate. The protein is Probable endonuclease 4 of Thermoplasma volcanium (strain ATCC 51530 / DSM 4299 / JCM 9571 / NBRC 15438 / GSS1).